Here is a 314-residue protein sequence, read N- to C-terminus: Short chain dehydrogenase atnD (314 aa).

Residues Leu41, Lys66, Asp90, and Asn116 each contribute to the NADP(+) site. Active-site proton donor residues include Ser171 and Tyr204. The NADP(+) site is built by Tyr204 and Lys208. Lys208 serves as the catalytic Lowers pKa of active site Tyr.

Belongs to the short-chain dehydrogenases/reductases (SDR) family.

It participates in secondary metabolite biosynthesis. Functionally, short chain dehydrogenase; part of the gene cluster that mediates the biosynthesis of aspercryptins, linear lipopeptides built from six amino acids including 2 highly unusual and nonproteogenic amino acids, 2-amino-octanoic acid (2aoa) and 2-amino-dodecanol (2adol). The core structure of aspercryptins is as follows: Ser/Ala-Thr-Ile/Val-2aoa-Asn-2adol. The first step of aspercryptin biosynthesis is the generation of the fatty acid precursors, octanoic and dodecanoic acids, by the FAS subunits atnF and atnM. The fatty acid precursors are likely transformed into the corresponding alpha-amino fatty acids in three steps. First, they are hydroxylated by the cytochrome P450 monooxygenase atnE, then oxidized to the corresponding alpha-keto acids by the NAD(P)-dependent oxidoreductase atnD, and finally converted to the alpha-amino fatty acids by the PLP-dependent aminotransferases atnH or atnJ. the alpha-amino fatty acids, 2-amino-octanoic and 2-amino-dodecanoic acids, are recognized, activated, and covalently tethered to the NRPS atnA by its fourth and sixth adenylation domains. The second module of atnA is the Thr module and contains an epimerase (E) domain responsible for the epimerization of Thr to D-allo-Thr. Additionally, despite atnA having only one epimerase domain, the first amino acid of aspercryptin A1 is D-Ser, suggesting that serine is either loaded directly as D-Ser on the first module or that the epimerase domain in the threonine module epimerizes both L-Ser and L-Thr. After condensation of the hexapeptide of aspercryptin, the C-terminal reductase (TE) domain might be involved in the reductive release and production of the aldehyde hexapeptide. Further reduction would generate aspercryptins. The variety of aspercryptins produced reflects the flexibility of the atnA NRPS, allowing incorporation of alanine instead of serine, valine for isoleucine, and a C10 fatty amino alcohol instead of the C12 version. AtnB seems to be involved in the selectivity for Ile versus Val by the third module. Moreover, type B, C and D aspercryptins have an additional N-terminal cichorine, acetyl and propionyl group respectively. The chain is Short chain dehydrogenase atnD from Emericella nidulans (strain FGSC A4 / ATCC 38163 / CBS 112.46 / NRRL 194 / M139) (Aspergillus nidulans).